Here is a 266-residue protein sequence, read N- to C-terminus: Type III pantothenate kinase (266 aa).

D6–V13 lines the ATP pocket. Residue G107–R110 coordinates substrate. Catalysis depends on D109, which acts as the Proton acceptor. D129 is a K(+) binding site. T132 lines the ATP pocket. Residue T184 coordinates substrate.

Belongs to the type III pantothenate kinase family. In terms of assembly, homodimer. NH4(+) is required as a cofactor. K(+) serves as cofactor.

It localises to the cytoplasm. The catalysed reaction is (R)-pantothenate + ATP = (R)-4'-phosphopantothenate + ADP + H(+). The protein operates within cofactor biosynthesis; coenzyme A biosynthesis; CoA from (R)-pantothenate: step 1/5. Functionally, catalyzes the phosphorylation of pantothenate (Pan), the first step in CoA biosynthesis. The polypeptide is Type III pantothenate kinase (Acidiphilium cryptum (strain JF-5)).